The chain runs to 550 residues: Dihydroxy-acid dehydratase (550 aa).

Aspartate 78 serves as a coordination point for Mg(2+). Residue cysteine 119 participates in [2Fe-2S] cluster binding. Mg(2+) contacts are provided by aspartate 120 and lysine 121. N6-carboxylysine is present on lysine 121. Cysteine 191 provides a ligand contact to [2Fe-2S] cluster. Position 440 (glutamate 440) interacts with Mg(2+). The active-site Proton acceptor is serine 466.

It belongs to the IlvD/Edd family. In terms of assembly, homodimer. Requires [2Fe-2S] cluster as cofactor. Mg(2+) is required as a cofactor.

The enzyme catalyses (2R)-2,3-dihydroxy-3-methylbutanoate = 3-methyl-2-oxobutanoate + H2O. The catalysed reaction is (2R,3R)-2,3-dihydroxy-3-methylpentanoate = (S)-3-methyl-2-oxopentanoate + H2O. It functions in the pathway amino-acid biosynthesis; L-isoleucine biosynthesis; L-isoleucine from 2-oxobutanoate: step 3/4. The protein operates within amino-acid biosynthesis; L-valine biosynthesis; L-valine from pyruvate: step 3/4. Functionally, functions in the biosynthesis of branched-chain amino acids. Catalyzes the dehydration of (2R,3R)-2,3-dihydroxy-3-methylpentanoate (2,3-dihydroxy-3-methylvalerate) into 2-oxo-3-methylpentanoate (2-oxo-3-methylvalerate) and of (2R)-2,3-dihydroxy-3-methylbutanoate (2,3-dihydroxyisovalerate) into 2-oxo-3-methylbutanoate (2-oxoisovalerate), the penultimate precursor to L-isoleucine and L-valine, respectively. The chain is Dihydroxy-acid dehydratase from Methanococcus maripaludis (strain C5 / ATCC BAA-1333).